The chain runs to 825 residues: Osmosensitive cation channel TMEM63C (825 aa).

Residues M1–G50 lie on the Extracellular side of the membrane. The chain crosses the membrane as a helical span at residues V51–A75. Residues A76–G141 are Cytoplasmic-facing. Positions E98–K117 are disordered. The helical transmembrane segment at I142–L174 threads the bilayer. Residues S175–N198 lie on the Extracellular side of the membrane. A helical membrane pass occupies residues I199–S223. Residues S224–G418 are Cytoplasmic-facing. The helical transmembrane segment at P419 to T448 threads the bilayer. Residues M449 to N463 are Extracellular-facing. The helical transmembrane segment at P464 to E493 threads the bilayer. Residues Y494–T497 lie on the Cytoplasmic side of the membrane. Residues R498–W534 traverse the membrane as a helical segment. The Extracellular portion of the chain corresponds to L535–G557. Residues A558 to C590 traverse the membrane as a helical segment. At F591–Q610 the chain is on the cytoplasmic side. Residues F611–S629 form a helical membrane-spanning segment. The Extracellular segment spans residues I630–C632. Residues P633–A657 form a helical membrane-spanning segment. The Cytoplasmic portion of the chain corresponds to Y658–N664. The chain crosses the membrane as a helical span at residues Q665 to R693. At L694–Q698 the chain is on the extracellular side. The chain crosses the membrane as a helical span at residues P699–F719. At C720–Q825 the chain is on the cytoplasmic side. Residues S777–Q825 are disordered. Residues A779–V793 are compositionally biased toward polar residues. Acidic residues predominate over residues A796–E809.

It belongs to the CSC1 (TC 1.A.17) family. In terms of assembly, monomer.

The protein localises to the endoplasmic reticulum membrane. It localises to the cell membrane. It catalyses the reaction Ca(2+)(in) = Ca(2+)(out). Acts as an osmosensitive cation channel preferentially activated upon hypotonic stress. In contrast to tmem63b, does not show phospholipid scramblase activity. Required for the functional integrity of the kidney glomerular filtration barrier. In Danio rerio (Zebrafish), this protein is Osmosensitive cation channel TMEM63C (tmem63c).